Reading from the N-terminus, the 250-residue chain is Prolactin-7A2 (250 aa).

A signal peptide spans 1–29 (MQLSFSRPRPWTLLLMVVSNLLLWENVSS). N-linked (GlcNAc...) asparagine glycans are attached at residues Asn-26, Asn-35, Asn-102, and Asn-134. 2 disulfides stabilise this stretch: Cys-100-Cys-215 and Cys-232-Cys-241.

This sequence belongs to the somatotropin/prolactin family. Expression restricted to placental tissues. Trophoblast giant cells are found to be the major source.

The protein resides in the secreted. The chain is Prolactin-7A2 (Prl7a2) from Rattus norvegicus (Rat).